Here is a 405-residue protein sequence, read N- to C-terminus: Tyrosine--tRNA ligase (405 aa).

Tyrosine 35 serves as a coordination point for L-tyrosine. Residues 40-49 (TTSSSLHIGH) carry the 'HIGH' region motif. 2 residues coordinate L-tyrosine: tyrosine 166 and glutamine 170. A 'KMSKS' region motif is present at residues 226-230 (KMGKS). Lysine 229 is a binding site for ATP. One can recognise an S4 RNA-binding domain in the interval 340-404 (ILLIDLMLDS…VGKKKFLRIV (65 aa)).

Belongs to the class-I aminoacyl-tRNA synthetase family. TyrS type 1 subfamily. In terms of assembly, homodimer.

The protein resides in the cytoplasm. The enzyme catalyses tRNA(Tyr) + L-tyrosine + ATP = L-tyrosyl-tRNA(Tyr) + AMP + diphosphate + H(+). Catalyzes the attachment of tyrosine to tRNA(Tyr) in a two-step reaction: tyrosine is first activated by ATP to form Tyr-AMP and then transferred to the acceptor end of tRNA(Tyr). In Borrelia garinii subsp. bavariensis (strain ATCC BAA-2496 / DSM 23469 / PBi) (Borreliella bavariensis), this protein is Tyrosine--tRNA ligase.